We begin with the raw amino-acid sequence, 152 residues long: Protein D1 (152 aa).

This sequence belongs to the phosphatidylethanolamine-binding protein family.

This chain is Protein D1 (D1), found in Onchocerca volvulus.